The primary structure comprises 229 residues: Peroxiredoxin-like 2A (229 aa).

A thioredoxin fold region spans residues 14–112 (MWSIGAGALG…DQLGVPLYAV (99 aa)). Residues Cys85 and Cys88 each act as redox-active in the active site.

The protein belongs to the peroxiredoxin-like PRXL2 family. PRXL2A subfamily. In terms of tissue distribution, expressed in CSF1 and TNFSF11-stimulated CD14(+) peripheral blood mononuclear cells (PBMCs).

Its subcellular location is the cytoplasm. It localises to the secreted. In terms of biological role, involved in redox regulation of the cell. Acts as an antioxidant. Inhibits TNFSF11-induced NFKB1 and JUN activation and osteoclast differentiation. May affect bone resorption and help to maintain bone mass. Acts as a negative regulator of macrophage-mediated inflammation by inhibiting macrophage production of inflammatory cytokines, probably through suppression of the MAPK signaling pathway. In Homo sapiens (Human), this protein is Peroxiredoxin-like 2A.